A 711-amino-acid chain; its full sequence is Polyribonucleotide nucleotidyltransferase (711 aa).

Mg(2+)-binding residues include aspartate 486 and aspartate 492. The region spanning 553–612 is the KH domain; sequence PRIHTIKINPDKIKDVIGKGGSVIRALTEETGTTIEIEDDGTVKIAATDGEKAKHAIRRI. Positions 622–690 constitute an S1 motif domain; sequence GRVYTGKVTR…RQGRIRLSIK (69 aa). The disordered stretch occupies residues 690-711; the sequence is KEATEQSQPAAAPEAPAAEQGE. Residues 694-711 are compositionally biased toward low complexity; that stretch reads EQSQPAAAPEAPAAEQGE.

This sequence belongs to the polyribonucleotide nucleotidyltransferase family. In terms of assembly, component of the RNA degradosome, which is a multiprotein complex involved in RNA processing and mRNA degradation. It depends on Mg(2+) as a cofactor.

It localises to the cytoplasm. It carries out the reaction RNA(n+1) + phosphate = RNA(n) + a ribonucleoside 5'-diphosphate. Its function is as follows. Involved in mRNA degradation. Catalyzes the phosphorolysis of single-stranded polyribonucleotides processively in the 3'- to 5'-direction. In Shigella dysenteriae serotype 1 (strain Sd197), this protein is Polyribonucleotide nucleotidyltransferase.